The chain runs to 1135 residues: Phytochrome C (1135 aa).

Positions 1–11 (MSSPLNNRGTC) are enriched in polar residues. The disordered stretch occupies residues 1 to 26 (MSSPLNNRGTCSRSSSARSRHSARVV). One can recognise a GAF domain in the interval 216–399 (NLSLLCDVLV…VFGIQLNKEV (184 aa)). Cysteine 321 lines the phytochromobilin pocket. PAS domains follow at residues 618–688 (VTNE…LQGI) and 748–822 (IQGD…TKLS). A Histidine kinase domain is found at 902 to 1122 (YIHQELRNPL…IILIEFPVAQ (221 aa)).

Belongs to the phytochrome family. As to quaternary structure, homodimer. In terms of processing, contains one covalently linked phytochromobilin chromophore.

In terms of biological role, regulatory photoreceptor which exists in two forms that are reversibly interconvertible by light: the Pr form that absorbs maximally in the red region of the spectrum and the Pfr form that absorbs maximally in the far-red region. Photoconversion of Pr to Pfr induces an array of morphogenic responses, whereas reconversion of Pfr to Pr cancels the induction of those responses. Pfr controls the expression of a number of nuclear genes including those encoding the small subunit of ribulose-bisphosphate carboxylase, chlorophyll A/B binding protein, protochlorophyllide reductase, rRNA, etc. It also controls the expression of its own gene(s) in a negative feedback fashion. The chain is Phytochrome C (PHYC) from Sorghum bicolor (Sorghum).